Consider the following 191-residue polypeptide: Protein Ves (191 aa).

The protein belongs to the Ves family.

This chain is Protein Ves, found in Escherichia fergusonii (strain ATCC 35469 / DSM 13698 / CCUG 18766 / IAM 14443 / JCM 21226 / LMG 7866 / NBRC 102419 / NCTC 12128 / CDC 0568-73).